The sequence spans 271 residues: Cytosolic Fe-S cluster assembly factor NUBP2 (271 aa).

N-acetylmethionine is present on Met-1. ATP is bound at residue 22–29; the sequence is GKGGVGKS. Residues Cys-196 and Cys-199 each coordinate [4Fe-4S] cluster.

Belongs to the Mrp/NBP35 ATP-binding proteins family. NUBP2/CFD1 subfamily. As to quaternary structure, heterotetramer of 2 NUBP1 and 2 NUBP2 chains. Interacts with KIFC1. Interacts with NUBP1. The cofactor is [4Fe-4S] cluster. Widely expressed with highest expression in skeletal muscle.

The protein resides in the nucleus. The protein localises to the cytoplasm. It is found in the cytoskeleton. It localises to the microtubule organizing center. Its subcellular location is the centrosome. The protein resides in the cilium axoneme. The protein localises to the centriole. Functionally, component of the cytosolic iron-sulfur (Fe/S) protein assembly (CIA) machinery. Required for maturation of extramitochondrial Fe-S proteins. The NUBP1-NUBP2 heterotetramer forms a Fe-S scaffold complex, mediating the de novo assembly of an Fe-S cluster and its transfer to target apoproteins. Negatively regulates cilium formation and structure. This Homo sapiens (Human) protein is Cytosolic Fe-S cluster assembly factor NUBP2.